The chain runs to 107 residues: Phosphoribosyl-ATP pyrophosphatase (107 aa).

It belongs to the PRA-PH family.

It is found in the cytoplasm. It carries out the reaction 1-(5-phospho-beta-D-ribosyl)-ATP + H2O = 1-(5-phospho-beta-D-ribosyl)-5'-AMP + diphosphate + H(+). Its pathway is amino-acid biosynthesis; L-histidine biosynthesis; L-histidine from 5-phospho-alpha-D-ribose 1-diphosphate: step 2/9. In Nitrobacter hamburgensis (strain DSM 10229 / NCIMB 13809 / X14), this protein is Phosphoribosyl-ATP pyrophosphatase.